The primary structure comprises 445 residues: Ribosomal protein uS12 methylthiotransferase RimO (445 aa).

The region spanning Tyr4–Asn119 is the MTTase N-terminal domain. [4Fe-4S] cluster-binding residues include Cys13, Cys48, Cys82, Cys157, Cys161, and Cys164. A Radical SAM core domain is found at Thr143–Glu373. One can recognise a TRAM domain in the interval Lys376–Asn441.

It belongs to the methylthiotransferase family. RimO subfamily. Requires [4Fe-4S] cluster as cofactor.

The protein localises to the cytoplasm. The enzyme catalyses L-aspartate(89)-[ribosomal protein uS12]-hydrogen + (sulfur carrier)-SH + AH2 + 2 S-adenosyl-L-methionine = 3-methylsulfanyl-L-aspartate(89)-[ribosomal protein uS12]-hydrogen + (sulfur carrier)-H + 5'-deoxyadenosine + L-methionine + A + S-adenosyl-L-homocysteine + 2 H(+). Functionally, catalyzes the methylthiolation of an aspartic acid residue of ribosomal protein uS12. The sequence is that of Ribosomal protein uS12 methylthiotransferase RimO from Clostridium perfringens (strain 13 / Type A).